The chain runs to 91 residues: CRISPR-associated endoribonuclease Cas2 2 (91 aa).

Residue D6 participates in Mg(2+) binding.

Belongs to the CRISPR-associated endoribonuclease Cas2 protein family. In terms of assembly, homodimer, forms a heterotetramer with a Cas1 homodimer. The cofactor is Mg(2+).

Functionally, CRISPR (clustered regularly interspaced short palindromic repeat), is an adaptive immune system that provides protection against mobile genetic elements (viruses, transposable elements and conjugative plasmids). CRISPR clusters contain sequences complementary to antecedent mobile elements and target invading nucleic acids. CRISPR clusters are transcribed and processed into CRISPR RNA (crRNA). Functions as a ssRNA-specific endoribonuclease. Involved in the integration of spacer DNA into the CRISPR cassette. The sequence is that of CRISPR-associated endoribonuclease Cas2 2 from Moorella thermoacetica (strain ATCC 39073 / JCM 9320).